The following is a 274-amino-acid chain: Orotidine 5'-phosphate decarboxylase (274 aa).

Catalysis depends on K95, which acts as the Proton donor.

Belongs to the OMP decarboxylase family. Type 2 subfamily.

The catalysed reaction is orotidine 5'-phosphate + H(+) = UMP + CO2. It participates in pyrimidine metabolism; UMP biosynthesis via de novo pathway; UMP from orotate: step 2/2. In Mycobacterium bovis (strain ATCC BAA-935 / AF2122/97), this protein is Orotidine 5'-phosphate decarboxylase (pyrF).